The sequence spans 218 residues: Translation initiation factor 6 (218 aa).

Belongs to the eIF-6 family.

Functionally, binds to the 50S ribosomal subunit and prevents its association with the 30S ribosomal subunit to form the 70S initiation complex. The polypeptide is Translation initiation factor 6 (Methanosarcina acetivorans (strain ATCC 35395 / DSM 2834 / JCM 12185 / C2A)).